The chain runs to 207 residues: Holliday junction branch migration complex subunit RuvA (207 aa).

Residues methionine 1–histidine 65 are domain I. Positions serine 66–glutamate 144 are domain II. Residues threonine 145–threonine 150 are flexible linker. A domain III region spans residues threonine 150 to aspartate 207.

This sequence belongs to the RuvA family. In terms of assembly, homotetramer. Forms an RuvA(8)-RuvB(12)-Holliday junction (HJ) complex. HJ DNA is sandwiched between 2 RuvA tetramers; dsDNA enters through RuvA and exits via RuvB. An RuvB hexamer assembles on each DNA strand where it exits the tetramer. Each RuvB hexamer is contacted by two RuvA subunits (via domain III) on 2 adjacent RuvB subunits; this complex drives branch migration. In the full resolvosome a probable DNA-RuvA(4)-RuvB(12)-RuvC(2) complex forms which resolves the HJ.

It localises to the cytoplasm. The RuvA-RuvB-RuvC complex processes Holliday junction (HJ) DNA during genetic recombination and DNA repair, while the RuvA-RuvB complex plays an important role in the rescue of blocked DNA replication forks via replication fork reversal (RFR). RuvA specifically binds to HJ cruciform DNA, conferring on it an open structure. The RuvB hexamer acts as an ATP-dependent pump, pulling dsDNA into and through the RuvAB complex. HJ branch migration allows RuvC to scan DNA until it finds its consensus sequence, where it cleaves and resolves the cruciform DNA. This is Holliday junction branch migration complex subunit RuvA from Chlamydia pneumoniae (Chlamydophila pneumoniae).